The primary structure comprises 299 residues: Tyrosine recombinase XerC (299 aa).

The 81-residue stretch at 1-81 folds into the Core-binding (CB) domain; that stretch reads MDEAIRRFIE…SWRQFYHWLQ (81 aa). The 180-residue stretch at 102-281 folds into the Tyr recombinase domain; sequence LLPKALPVDG…DFQHLAKVYD (180 aa). Residues R142, K166, H233, R236, and H259 contribute to the active site. The active-site O-(3'-phospho-DNA)-tyrosine intermediate is Y268.

Belongs to the 'phage' integrase family. XerC subfamily. As to quaternary structure, forms a cyclic heterotetrameric complex composed of two molecules of XerC and two molecules of XerD.

It is found in the cytoplasm. In terms of biological role, site-specific tyrosine recombinase, which acts by catalyzing the cutting and rejoining of the recombining DNA molecules. The XerC-XerD complex is essential to convert dimers of the bacterial chromosome into monomers to permit their segregation at cell division. It also contributes to the segregational stability of plasmids. In Chromobacterium violaceum (strain ATCC 12472 / DSM 30191 / JCM 1249 / CCUG 213 / NBRC 12614 / NCIMB 9131 / NCTC 9757 / MK), this protein is Tyrosine recombinase XerC.